A 355-amino-acid polypeptide reads, in one-letter code: MESCFQGDSRKSYSLSELAEILGAAVRGDPAIRIRGVNSLEDALPDELSFITDVRYKPLLSKCRAAAIIVSPALAELEFPLLVAERPYVVFARAAQLFAEPPFLAPGVHPGAYIGPNVHLGEGVSVGPQAHIGEDCVVGPGTRIYGSAYLGPGVRVGENCMLYPGAVILDRCLLGNRVTVHSGTVVGSDGFGYAQDEKGRHVKIPQTGIVQIDDDVEIGANCTVDRATFGRTWVRRGAKIDNQVQIAHNVVIGEHAILVAQVGISGSTTLGSHVVLAGQVGVAGHIEIGDRARVGAKSGVHHSVGAGEDILGIPGVPAREWKRTYANIQRLARFREELRLLVEKVQRIEKALDGE.

The active-site Proton acceptor is histidine 248.

Belongs to the transferase hexapeptide repeat family. LpxD subfamily. In terms of assembly, homotrimer.

It catalyses the reaction a UDP-3-O-[(3R)-3-hydroxyacyl]-alpha-D-glucosamine + a (3R)-hydroxyacyl-[ACP] = a UDP-2-N,3-O-bis[(3R)-3-hydroxyacyl]-alpha-D-glucosamine + holo-[ACP] + H(+). The protein operates within bacterial outer membrane biogenesis; LPS lipid A biosynthesis. Functionally, catalyzes the N-acylation of UDP-3-O-acylglucosamine using 3-hydroxyacyl-ACP as the acyl donor. Is involved in the biosynthesis of lipid A, a phosphorylated glycolipid that anchors the lipopolysaccharide to the outer membrane of the cell. This Syntrophobacter fumaroxidans (strain DSM 10017 / MPOB) protein is UDP-3-O-acylglucosamine N-acyltransferase.